The sequence spans 229 residues: 2-C-methyl-D-erythritol 4-phosphate cytidylyltransferase (229 aa).

It belongs to the IspD/TarI cytidylyltransferase family. IspD subfamily.

The enzyme catalyses 2-C-methyl-D-erythritol 4-phosphate + CTP + H(+) = 4-CDP-2-C-methyl-D-erythritol + diphosphate. Its pathway is isoprenoid biosynthesis; isopentenyl diphosphate biosynthesis via DXP pathway; isopentenyl diphosphate from 1-deoxy-D-xylulose 5-phosphate: step 2/6. In terms of biological role, catalyzes the formation of 4-diphosphocytidyl-2-C-methyl-D-erythritol from CTP and 2-C-methyl-D-erythritol 4-phosphate (MEP). This Clostridium botulinum (strain ATCC 19397 / Type A) protein is 2-C-methyl-D-erythritol 4-phosphate cytidylyltransferase.